A 244-amino-acid polypeptide reads, in one-letter code: Na(+)-translocating NADH-quinone reductase subunit E (244 aa).

The next 6 helical transmembrane spans lie at 11–31 (LLGI…TFLG), 50–70 (MSVA…HYFI), 90–110 (FLEL…LEVL), 123–143 (GIFL…LFGI), 153–173 (VVFS…FATI), and 191–211 (ISFI…GIDI). Positions 222–236 (VTNIATDSPQPNTHS) are enriched in polar residues. Residues 222–244 (VTNIATDSPQPNTHSSSEEPKAS) form a disordered region.

This sequence belongs to the NqrDE/RnfAE family. Composed of six subunits; NqrA, NqrB, NqrC, NqrD, NqrE and NqrF.

The protein localises to the cell inner membrane. The enzyme catalyses a ubiquinone + n Na(+)(in) + NADH + H(+) = a ubiquinol + n Na(+)(out) + NAD(+). Its function is as follows. NQR complex catalyzes the reduction of ubiquinone-1 to ubiquinol by two successive reactions, coupled with the transport of Na(+) ions from the cytoplasm to the periplasm. NqrA to NqrE are probably involved in the second step, the conversion of ubisemiquinone to ubiquinol. This Chlamydia trachomatis serovar A (strain ATCC VR-571B / DSM 19440 / HAR-13) protein is Na(+)-translocating NADH-quinone reductase subunit E.